Here is a 783-residue protein sequence, read N- to C-terminus: Endonuclease MutS2 (783 aa).

337 to 344 serves as a coordination point for ATP; that stretch reads GPNTGGKT. In terms of domain architecture, Smr spans 708–783; the sequence is LHLRGYRYEE…GFGVTVAELK (76 aa).

The protein belongs to the DNA mismatch repair MutS family. MutS2 subfamily. Homodimer. Binds to stalled ribosomes, contacting rRNA.

In terms of biological role, endonuclease that is involved in the suppression of homologous recombination and thus may have a key role in the control of bacterial genetic diversity. Acts as a ribosome collision sensor, splitting the ribosome into its 2 subunits. Detects stalled/collided 70S ribosomes which it binds and splits by an ATP-hydrolysis driven conformational change. Acts upstream of the ribosome quality control system (RQC), a ribosome-associated complex that mediates the extraction of incompletely synthesized nascent chains from stalled ribosomes and their subsequent degradation. Probably generates substrates for RQC. This is Endonuclease MutS2 from Staphylococcus haemolyticus (strain JCSC1435).